The sequence spans 313 residues: Foldase protein PrsA (313 aa).

Residues methionine 1–alanine 20 form the signal peptide. Cysteine 21 carries the N-palmitoyl cysteine lipid modification. A lipid anchor (S-diacylglycerol cysteine) is attached at cysteine 21. Residues threonine 143–lysine 241 enclose the PpiC domain.

It belongs to the PrsA family.

The protein resides in the cell membrane. The enzyme catalyses [protein]-peptidylproline (omega=180) = [protein]-peptidylproline (omega=0). In terms of biological role, plays a major role in protein secretion by helping the post-translocational extracellular folding of several secreted proteins. The chain is Foldase protein PrsA from Streptococcus pneumoniae serotype 4 (strain ATCC BAA-334 / TIGR4).